The primary structure comprises 188 residues: Actin-related protein 2/3 complex subunit 3 (188 aa).

This sequence belongs to the ARPC3 family. As to quaternary structure, component of the Arp2/3 complex.

The protein resides in the cytoplasm. It is found in the cytoskeleton. Functionally, functions as a component of the Arp2/3 complex which is involved in regulation of actin polymerization and together with an activating nucleation-promoting factor (NPF) mediates the formation of branched actin networks. The sequence is that of Actin-related protein 2/3 complex subunit 3 from Entamoeba histolytica (strain ATCC 30459 / HM-1:IMSS / ABRM).